A 379-amino-acid chain; its full sequence is Glucose-1-phosphate adenylyltransferase (379 aa).

Alpha-D-glucose 1-phosphate-binding positions include glycine 164, 179 to 180 (EK), and serine 190.

The protein belongs to the bacterial/plant glucose-1-phosphate adenylyltransferase family. Homotetramer.

It carries out the reaction alpha-D-glucose 1-phosphate + ATP + H(+) = ADP-alpha-D-glucose + diphosphate. The protein operates within glycan biosynthesis; glycogen biosynthesis. Functionally, involved in the biosynthesis of ADP-glucose, a building block required for the elongation reactions to produce glycogen. Catalyzes the reaction between ATP and alpha-D-glucose 1-phosphate (G1P) to produce pyrophosphate and ADP-Glc. This is Glucose-1-phosphate adenylyltransferase from Lactiplantibacillus plantarum (strain ATCC BAA-793 / NCIMB 8826 / WCFS1) (Lactobacillus plantarum).